The primary structure comprises 81 residues: Large ribosomal subunit protein bL31B (81 aa).

This sequence belongs to the bacterial ribosomal protein bL31 family. Type B subfamily. Part of the 50S ribosomal subunit.

In Borreliella burgdorferi (strain ATCC 35210 / DSM 4680 / CIP 102532 / B31) (Borrelia burgdorferi), this protein is Large ribosomal subunit protein bL31B.